We begin with the raw amino-acid sequence, 491 residues long: Maintenance of mitochondrial morphology protein 1 (491 aa).

Residues M1 to G22 lie on the Lumenal side of the membrane. Residues F23 to F43 traverse the membrane as a helical segment. Topologically, residues G44–N491 are cytoplasmic. Disordered stretches follow at residues P50 to S95, P275 to S325, and R392 to N491. Basic residues predominate over residues L54–S64. 2 stretches are compositionally biased toward polar residues: residues N65–R78 and S85–S95. One can recognise an SMP-LTD domain in the interval Q131–P384. Over residues P275–P287 the composition is skewed to pro residues. Polar residues-rich tracts occupy residues T300 to E315 and T403 to A412. Basic and acidic residues predominate over residues R422–R434.

The protein belongs to the MMM1 family. As to quaternary structure, homodimer. Component of the ER-mitochondria encounter structure (ERMES) or MDM complex, composed of mmm1, mdm10, mdm12 and mdm34. A mmm1 homodimer associates with one molecule of mdm12 on each side in a pairwise head-to-tail manner, and the SMP-LTD domains of mmm1 and mdm12 generate a continuous hydrophobic tunnel for phospholipid trafficking.

Its subcellular location is the endoplasmic reticulum membrane. Functionally, component of the ERMES/MDM complex, which serves as a molecular tether to connect the endoplasmic reticulum (ER) and mitochondria. Components of this complex are involved in the control of mitochondrial shape and protein biogenesis, and function in nonvesicular lipid trafficking between the ER and mitochondria. The mdm12-mmm1 subcomplex functions in the major beta-barrel assembly pathway that is responsible for biogenesis of all outer membrane beta-barrel proteins, and acts in a late step after the SAM complex. The mdm10-mdm12-mmm1 subcomplex further acts in the TOM40-specific pathway after the action of the mdm12-mmm1 complex. Essential for establishing and maintaining the structure of mitochondria and maintenance of mtDNA nucleoids. This chain is Maintenance of mitochondrial morphology protein 1, found in Aspergillus flavus (strain ATCC 200026 / FGSC A1120 / IAM 13836 / NRRL 3357 / JCM 12722 / SRRC 167).